The chain runs to 353 residues: MSAQNLSFVLQGIHQVKFEDRPIPELKDPHGVIVNVRFTGICGSDVHYWEHGSIGQFVVKDPMVLGHESSGVITKVGSAVTTLKVGDRVAMEPGIPCRRCEPCKAGKYNLCYEMAFAATPPYDGTLAKYYALPEDFCYKLPEQITLQEGALMEPLGVAVHIVRQAAVTPGQSVVVFGAGPVGLLCCAVARAFGASKIVAVDIQKPRLEFAKNYAATAIFEPAKVAAQENAARLIAENDLGPGADVAIDASGAEPSVHTGIHVLRTGGTYVQGGMGRSEMNFPIMAACTKELNVKGSFRYGSGDYKLAVELVASGRVNVKELITGVVKFEEAEQAFKEVKAGKGIKTLISGIEA.

Residues C42, H67, and E68 each coordinate Zn(2+). Position 177 to 182 (G177 to G182) interacts with NAD(+).

It belongs to the zinc-containing alcohol dehydrogenase family. It depends on Zn(2+) as a cofactor.

The catalysed reaction is xylitol + NAD(+) = D-xylulose + NADH + H(+). It functions in the pathway carbohydrate degradation; L-arabinose degradation via L-arabinitol; D-xylulose 5-phosphate from L-arabinose (fungal route): step 4/5. Functionally, xylitol dehydrogenase which catalyzes the conversion of xylitol to D-xylulose. Xylose is a major component of hemicelluloses such as xylan. Most fungi utilize D-xylose via three enzymatic reactions, xylose reductase (XR), xylitol dehydrogenase (XDH), and xylulokinase, to form xylulose 5-phosphate, which enters pentose phosphate pathway. This is Probable D-xylulose reductase A (xdhA) from Aspergillus terreus (strain NIH 2624 / FGSC A1156).